The chain runs to 284 residues: Lipase chaperone (284 aa).

A helical membrane pass occupies residues 4-24 (IAWSLGILVTIGALCAIVWPS).

This sequence belongs to the lipase chaperone family.

Its subcellular location is the cell inner membrane. In terms of biological role, may be involved in the folding of the extracellular lipase during its passage through the periplasm. The chain is Lipase chaperone (lifO) from Vibrio cholerae serotype O1 (strain ATCC 39315 / El Tor Inaba N16961).